Reading from the N-terminus, the 575-residue chain is Dihydroxy-acid dehydratase (575 aa).

Residue Cys64 coordinates [2Fe-2S] cluster. Asp96 serves as a coordination point for Mg(2+). Cys137 is a binding site for [2Fe-2S] cluster. Residues Asp138 and Lys139 each coordinate Mg(2+). Lys139 is modified (N6-carboxylysine). Cys214 provides a ligand contact to [2Fe-2S] cluster. Residue Glu465 participates in Mg(2+) binding. The Proton acceptor role is filled by Ser491.

This sequence belongs to the IlvD/Edd family. Homodimer. It depends on [2Fe-2S] cluster as a cofactor. The cofactor is Mg(2+).

The catalysed reaction is (2R)-2,3-dihydroxy-3-methylbutanoate = 3-methyl-2-oxobutanoate + H2O. It carries out the reaction (2R,3R)-2,3-dihydroxy-3-methylpentanoate = (S)-3-methyl-2-oxopentanoate + H2O. The protein operates within amino-acid biosynthesis; L-isoleucine biosynthesis; L-isoleucine from 2-oxobutanoate: step 3/4. Its pathway is amino-acid biosynthesis; L-valine biosynthesis; L-valine from pyruvate: step 3/4. Functions in the biosynthesis of branched-chain amino acids. Catalyzes the dehydration of (2R,3R)-2,3-dihydroxy-3-methylpentanoate (2,3-dihydroxy-3-methylvalerate) into 2-oxo-3-methylpentanoate (2-oxo-3-methylvalerate) and of (2R)-2,3-dihydroxy-3-methylbutanoate (2,3-dihydroxyisovalerate) into 2-oxo-3-methylbutanoate (2-oxoisovalerate), the penultimate precursor to L-isoleucine and L-valine, respectively. The sequence is that of Dihydroxy-acid dehydratase from Mycobacterium bovis (strain ATCC BAA-935 / AF2122/97).